An 86-amino-acid chain; its full sequence is MAQKKGGGSTRNGRDSESKRLGVKVFGGQAINAGGIIIRQRGTRVHAGDNVGVGKDHTLFALVDGHVQFAVKGPAKKQQVSVVPAA.

Gly residues predominate over residues 1–10 (MAQKKGGGST). Residues 1–21 (MAQKKGGGSTRNGRDSESKRL) are disordered.

It belongs to the bacterial ribosomal protein bL27 family.

This chain is Large ribosomal subunit protein bL27, found in Cupriavidus necator (strain ATCC 17699 / DSM 428 / KCTC 22496 / NCIMB 10442 / H16 / Stanier 337) (Ralstonia eutropha).